Consider the following 232-residue polypeptide: MAAAVAELWETLKQAIVAYTGLSPAAFFTAVAAAAALYHVVSGIFAGPPPPPPPRPRDEPEAEPLPPPVQLGEVSEEELRQYDGSDPKKPLLMAIKGQIYDVTQSRMFYGPGGPYALFAGKDASRALAKMSFEPQDLTGDISGLGPFELDALQDWEYKFMGKYVKVGTVKKTVPVEDGAPSTSPETTETAAAAEPEKAPATEEKPREVSSEEVKEKEDAVAAAAPDEGAKES.

The chain crosses the membrane as a helical span at residues 25-45 (AAFFTAVAAAAALYHVVSGIF). 2 disordered regions span residues 48-77 (PPPP…VSEE) and 172-232 (TVPV…AKES). Residues 71–170 (LGEVSEEELR…GKYVKVGTVK (100 aa)) enclose the Cytochrome b5 heme-binding domain. A steroid-binding region spans residues 73-170 (EVSEEELRQY…GKYVKVGTVK (98 aa)). The span at 179 to 193 (APSTSPETTETAAAA) shows a compositional bias: low complexity. Residues 194–219 (EPEKAPATEEKPREVSSEEVKEKEDA) show a composition bias toward basic and acidic residues.

Belongs to the cytochrome b5 family. MAPR subfamily. In terms of assembly, interacts with SERL2. As to expression, expressed in leaf sheaths, leaf blades and panicles.

The protein resides in the cell membrane. Its function is as follows. Binds multiple steroid compounds. May act as a coreceptor with SERL2 and enhance its endocytosis. This chain is Membrane steroid-binding protein 1, found in Oryza sativa subsp. japonica (Rice).